Consider the following 1071-residue polypeptide: DNA-directed RNA polymerase subunit beta (1071 aa).

The protein belongs to the RNA polymerase beta chain family. In terms of assembly, in plastids the minimal PEP RNA polymerase catalytic core is composed of four subunits: alpha, beta, beta', and beta''. When a (nuclear-encoded) sigma factor is associated with the core the holoenzyme is formed, which can initiate transcription.

Its subcellular location is the plastid. It is found in the chloroplast. It catalyses the reaction RNA(n) + a ribonucleoside 5'-triphosphate = RNA(n+1) + diphosphate. Its function is as follows. DNA-dependent RNA polymerase catalyzes the transcription of DNA into RNA using the four ribonucleoside triphosphates as substrates. This is DNA-directed RNA polymerase subunit beta from Adiantum capillus-veneris (Maidenhair fern).